The chain runs to 165 residues: Nucleotide-binding protein CHY_1197 (165 aa).

Belongs to the YajQ family.

Nucleotide-binding protein. This Carboxydothermus hydrogenoformans (strain ATCC BAA-161 / DSM 6008 / Z-2901) protein is Nucleotide-binding protein CHY_1197.